The primary structure comprises 104 residues: ATP-dependent Clp protease adapter protein ClpS (104 aa).

It belongs to the ClpS family. In terms of assembly, binds to the N-terminal domain of the chaperone ClpA.

Functionally, involved in the modulation of the specificity of the ClpAP-mediated ATP-dependent protein degradation. This Nitratidesulfovibrio vulgaris (strain ATCC 29579 / DSM 644 / CCUG 34227 / NCIMB 8303 / VKM B-1760 / Hildenborough) (Desulfovibrio vulgaris) protein is ATP-dependent Clp protease adapter protein ClpS.